A 104-amino-acid chain; its full sequence is L-rhamnose mutarotase (104 aa).

Residue Y18 coordinates substrate. H22 (proton donor) is an active-site residue. Substrate contacts are provided by residues Y41 and 76–77; that span reads WW.

This sequence belongs to the rhamnose mutarotase family. As to quaternary structure, homodimer.

It localises to the cytoplasm. It catalyses the reaction alpha-L-rhamnose = beta-L-rhamnose. It functions in the pathway carbohydrate metabolism; L-rhamnose metabolism. Functionally, involved in the anomeric conversion of L-rhamnose. In Bacillus subtilis (strain 168), this protein is L-rhamnose mutarotase.